A 385-amino-acid polypeptide reads, in one-letter code: UPF0284 protein P9301_04631 (385 aa).

The protein belongs to the UPF0284 family.

The protein is UPF0284 protein P9301_04631 of Prochlorococcus marinus (strain MIT 9301).